Here is an 852-residue protein sequence, read N- to C-terminus: Bifunctional heparan sulfate N-deacetylase/N-sulfotransferase 1 (852 aa).

Residues 1 to 13 (MIITPYLNRKITR) lie on the Cytoplasmic side of the membrane. Residues 14-34 (PLKWILALIFLYLIYICLFSN) form a helical; Signal-anchor for type II membrane protein membrane-spanning segment. The heparan sulfate N-deacetylase 1 stretch occupies residues 34 to 574 (NNSKPPKPRK…PRHHAILPPS (541 aa)). At 35–852 (NSKPPKPRKK…WLEESVRIRA (818 aa)) the chain is on the lumenal side. Residues Asn50, Asn72, Asn261, Asn328, Asn377, Asn428, and Asn576 are each glycosylated (N-linked (GlcNAc...) asparagine). A heparan sulfate N-sulfotransferase 1 region spans residues 575–852 (INCTKKSLPD…WLEESVRIRA (278 aa)). Lys592 (for sulfotransferase activity) is an active-site residue. A 3'-phosphoadenylyl sulfate-binding site is contributed by 592 to 596 (KTGST). The N-linked (GlcNAc...) asparagine glycan is linked to Asn607. Ser686 lines the 3'-phosphoadenylyl sulfate pocket. N-linked (GlcNAc...) asparagine glycosylation occurs at Asn712. Cys789 and Cys798 form a disulfide bridge. A 3'-phosphoadenylyl sulfate-binding site is contributed by 803–807 (KGRKY).

This sequence belongs to the sulfotransferase 1 family. NDST subfamily. As to quaternary structure, monomer. In terms of tissue distribution, present in some specific neurons in head and tail regions and muscles.

It is found in the golgi apparatus membrane. The enzyme catalyses alpha-D-glucosaminyl-[heparan sulfate](n) + 3'-phosphoadenylyl sulfate = N-sulfo-alpha-D-glucosaminyl-[heparan sulfate](n) + adenosine 3',5'-bisphosphate + 2 H(+). The protein operates within glycan metabolism; heparan sulfate biosynthesis. It functions in the pathway glycan metabolism; heparin biosynthesis. Its function is as follows. Essential bifunctional enzyme that catalyzes both the N-deacetylation and the N-sulfation of glucosamine (GlcNAc) of the glycosaminoglycan in heparan sulfate. Modifies the GlcNAc-GlcA disaccharide repeating sugar backbone to make N-sulfated heparosan, a prerequisite substrate for later modifications in heparin biosynthesis. This chain is Bifunctional heparan sulfate N-deacetylase/N-sulfotransferase 1 (hst-1), found in Caenorhabditis elegans.